A 733-amino-acid chain; its full sequence is Two pore calcium channel protein 1 (733 aa).

Met1 is subject to N-acetylmethionine. At Met1–Asp71 the chain is on the cytoplasmic side. The helical transmembrane segment at Leu72–Trp92 threads the bilayer. Residues Cys93 to Ser120 are Vacuolar-facing. The chain crosses the membrane as a helical span at residues Ile121–Tyr141. Residues Glu142–Ala158 lie on the Cytoplasmic side of the membrane. The chain crosses the membrane as a helical span at residues Cys159–Phe179. Residue Asp180 is a topological domain, vacuolar. The chain crosses the membrane as a helical; Voltage-sensor span at residues Phe181–Ile199. Over Arg200–Asn218 the chain is Cytoplasmic. A helical transmembrane segment spans residues Ile219 to Glu239. The Vacuolar segment spans residues Asp240 to Leu245. The pore-forming intramembrane region spans Thr246 to Ile260. The Vacuolar segment spans residues Leu261–Ser282. A helical transmembrane segment spans residues Val283–Val303. Residues Val304–Arg428 lie on the Cytoplasmic side of the membrane. 2 consecutive EF-hand domains span residues Met322–Tyr357 and Ile363–Arg398. The helical transmembrane segment at Ser429 to Val449 threads the bilayer. Residues Glu450–Gln465 are Vacuolar-facing. Residues Val466–Tyr486 traverse the membrane as a helical segment. Residues Gly487–Arg498 lie on the Cytoplasmic side of the membrane. Residues Phe499–Asp519 form a helical membrane-spanning segment. The Vacuolar portion of the chain corresponds to Glu520–Glu528. Residues Trp529 to Met546 traverse the membrane as a helical; Voltage-sensor segment. Over Asn547 to Thr557 the chain is Cytoplasmic. Residues Phe558–Ile578 traverse the membrane as a helical segment. The Vacuolar segment spans residues Tyr579–Asp615. The pore-forming intramembrane region spans Tyr616–Gly630. At Asn631–Tyr651 the chain is on the vacuolar side. The chain crosses the membrane as a helical span at residues Phe652–Leu672. Topologically, residues Glu673 to Thr733 are cytoplasmic. Basic and acidic residues predominate over residues Lys686–Lys695. Positions Lys686–Val711 are disordered.

This sequence belongs to the calcium channel alpha-1 subunit (TC 1.A.1.11) family. Two pore calcium channel subfamily. In terms of assembly, homodimer. In terms of tissue distribution, ubiquitously expressed.

The protein localises to the vacuole membrane. Inhibited by Al(3+). Functions as a voltage-gated inward-rectifying Ca(2+) channel (VDCC) across the vacuole membrane. Is one of the essential components of the slow vacuolar (SV) channel. Acts as the major ROS-responsive Ca(2+) channel and is the possible target of Al-dependent inhibition. Involved in the regulation of germination and stomatal movement. This Arabidopsis thaliana (Mouse-ear cress) protein is Two pore calcium channel protein 1 (TPC1).